Reading from the N-terminus, the 221-residue chain is MKDNQEQAAPIVYWRIDEWFPDLSPDLRTRLKTYHEELLKFNRTLNLISAKTVFVADALHFADSIMASQAIMKSNPSLDKIYDLGSGNGFPGMIFALLYPKVQVVLVEFDQKKCEFLNHVAGVLKLSNVTVENRTIESFPDGSMKYVMARGLANISKSIMMTRKVVPKGGVFYHLKSEEWGIEVGDIPTQLCSVWAPSLVGEYKLPIGAIKFSVVKTDKIA.

S-adenosyl-L-methionine is bound by residues glycine 85, phenylalanine 90, 136-137, and arginine 150; that span reads IE.

This sequence belongs to the methyltransferase superfamily. RNA methyltransferase RsmG family.

It is found in the cytoplasm. The enzyme catalyses guanosine(527) in 16S rRNA + S-adenosyl-L-methionine = N(7)-methylguanosine(527) in 16S rRNA + S-adenosyl-L-homocysteine. Its function is as follows. Specifically methylates the N7 position of guanine in position 527 of 16S rRNA. This Bdellovibrio bacteriovorus (strain ATCC 15356 / DSM 50701 / NCIMB 9529 / HD100) protein is Ribosomal RNA small subunit methyltransferase G 3.